The following is a 550-amino-acid chain: MDSPTTQRPNMEIGRAFVNYHPSIWGEHFIAASPDVMRLDAHKGRGEELKEVVRNMFSTVNDPLLKMNLIDAIQRLGVAYHFEMEIDKALGQMYDDHINGKDDGFDLQTLALQFRLLRQQGYNVSSGVFAKFKDDEGNFSSILSKDTHGLLSLYEAAFLGTHGDDILDEAITFTTVHLKSTLPHVSAPLTKLVELALEIPLHRRMERLQTRFYISIYEEDRERNDVLLEFSKLEFLRLQSLHQRELRDISLWWKEMDLLAKLPFTRDRVLEGYFWTVGVYFEPHYSRARMIMTKMIAFATVMDDTYDVYGTLEELELLTATIERWNRGDMDQLPDYMKVIFIALLDGVDATEDDLTGEGKSYRIYYLKEAVKDLAKAYLAEARWVSSGYVPTSEEYMKVALISAVYPMLFVAFLIGMDEVVTKEVLEWAIHMPTMLRTCSIVARLMDDIPSNKLEQERKHVSSSVECYMKEHGTSYHESIQKLREMVASGWKDINKECLKPTPVPTAVINVILNFTRVLEIIYQHRDGYTDASVETKEHIASLFVDPIPL.

Residues D303, D307, D447, and E455 each coordinate Mg(2+). A DDXXD motif motif is present at residues 303-307 (DDTYD).

This sequence belongs to the terpene synthase family. Tpsa subfamily. Mg(2+) serves as cofactor. In terms of tissue distribution, expressed in young developing leaves and in stamens. Not detected in tepals and carpels.

The catalysed reaction is (2E,6E)-farnesyl diphosphate = beta-cubebene + diphosphate. It functions in the pathway secondary metabolite biosynthesis; terpenoid biosynthesis. Sesquiterpene synthase converting farnesyl diphosphate into beta-cubebene (24.5%), alpha-muurolene (19.3%), delta-cadinol (18.6%), delta-elemene (16.0%), tau-muurolene (10.8%), and beta-elemene (10.8%). No activity with geranyl diphosphate or geranylgeranyl diphosphate. The chain is Beta-cubebene synthase from Magnolia grandiflora (Southern magnolia).